The primary structure comprises 492 residues: Argininosuccinate lyase (492 aa).

This sequence belongs to the lyase 1 family. Argininosuccinate lyase subfamily.

It localises to the cytoplasm. It carries out the reaction 2-(N(omega)-L-arginino)succinate = fumarate + L-arginine. It functions in the pathway amino-acid biosynthesis; L-arginine biosynthesis; L-arginine from L-ornithine and carbamoyl phosphate: step 3/3. This is Argininosuccinate lyase from Methanocorpusculum labreanum (strain ATCC 43576 / DSM 4855 / Z).